The chain runs to 280 residues: Energy-coupling factor transporter ATP-binding protein EcfA1 (280 aa).

In terms of domain architecture, ABC transporter spans Ile6–Asp244. Gly43–Ser50 provides a ligand contact to ATP.

This sequence belongs to the ABC transporter superfamily. Energy-coupling factor EcfA family. In terms of assembly, forms a stable energy-coupling factor (ECF) transporter complex composed of 2 membrane-embedded substrate-binding proteins (S component), 2 ATP-binding proteins (A component) and 2 transmembrane proteins (T component).

It is found in the cell membrane. Its function is as follows. ATP-binding (A) component of a common energy-coupling factor (ECF) ABC-transporter complex. Unlike classic ABC transporters this ECF transporter provides the energy necessary to transport a number of different substrates. The protein is Energy-coupling factor transporter ATP-binding protein EcfA1 of Clostridium novyi (strain NT).